Consider the following 737-residue polypeptide: Procollagen-lysine,2-oxoglutarate 5-dioxygenase 2 (737 aa).

The signal sequence occupies residues 1–25 (MGGCTVKPQLLLLALVLHPWNPCLG). N-linked (GlcNAc...) asparagine glycosylation is found at Asn63, Asn209, and Asn297. The residue at position 320 (Thr320) is a Phosphothreonine. A Phosphotyrosine modification is found at Tyr323. 2 N-linked (GlcNAc...) asparagine glycosylation sites follow: Asn365 and Asn522. The Fe2OG dioxygenase domain maps to 644-737 (KGFALLNFVV…RYIAVSFIDP (94 aa)). Fe cation-binding residues include His666 and Asp668. Asn696 carries an N-linked (GlcNAc...) asparagine glycan. Residue Lys704 is modified to N6-succinyllysine. His718 serves as a coordination point for Fe cation. N-linked (GlcNAc...) asparagine glycosylation is present at Asn725. Arg728 is an active-site residue.

As to quaternary structure, homodimer. Fe(2+) is required as a cofactor. L-ascorbate serves as cofactor. Highly expressed in pancreas and muscle. Isoform 1 and isoform 2 are expressed in the majority of the examined cell types. Isoform 2 is specifically expressed in skin, lung, dura and aorta.

It is found in the rough endoplasmic reticulum membrane. The catalysed reaction is L-lysyl-[collagen] + 2-oxoglutarate + O2 = (5R)-5-hydroxy-L-lysyl-[collagen] + succinate + CO2. Forms hydroxylysine residues in -Xaa-Lys-Gly- sequences in collagens. These hydroxylysines serve as sites of attachment for carbohydrate units and are essential for the stability of the intermolecular collagen cross-links. This Homo sapiens (Human) protein is Procollagen-lysine,2-oxoglutarate 5-dioxygenase 2.